Reading from the N-terminus, the 379-residue chain is Protein RecA (379 aa).

The tract at residues 1–24 (MSVDVKSAQSSKSDSLQAEPRPGE) is disordered. Over residues 7 to 16 (SAQSSKSDSL) the composition is skewed to polar residues. 84 to 91 (GPESSGKT) is an ATP binding site.

The protein belongs to the RecA family.

Its subcellular location is the cytoplasm. In terms of biological role, can catalyze the hydrolysis of ATP in the presence of single-stranded DNA, the ATP-dependent uptake of single-stranded DNA by duplex DNA, and the ATP-dependent hybridization of homologous single-stranded DNAs. It interacts with LexA causing its activation and leading to its autocatalytic cleavage. This Prochlorococcus marinus (strain MIT 9303) protein is Protein RecA.